The following is a 96-amino-acid chain: Probable RNA-binding protein YqeI (96 aa).

A CRM domain is found at 1-96 (MLTGKQKRFL…SKENKQIELP (96 aa)).

The chain is Probable RNA-binding protein YqeI (yqeI) from Bacillus subtilis (strain 168).